The chain runs to 261 residues: Putative hydro-lyase Nther_1142 (261 aa).

Belongs to the D-glutamate cyclase family.

This Natranaerobius thermophilus (strain ATCC BAA-1301 / DSM 18059 / JW/NM-WN-LF) protein is Putative hydro-lyase Nther_1142.